The following is a 349-amino-acid chain: tRNA pseudouridine synthase D (349 aa).

Phe26 provides a ligand contact to substrate. Asp79 functions as the Nucleophile in the catalytic mechanism. Asn128 provides a ligand contact to substrate. Positions 154–303 (GVPNYFGSQR…VDAARRAMLV (150 aa)) constitute a TRUD domain. Phe329 contributes to the substrate binding site.

Belongs to the pseudouridine synthase TruD family.

The catalysed reaction is uridine(13) in tRNA = pseudouridine(13) in tRNA. In terms of biological role, responsible for synthesis of pseudouridine from uracil-13 in transfer RNAs. The protein is tRNA pseudouridine synthase D of Erwinia tasmaniensis (strain DSM 17950 / CFBP 7177 / CIP 109463 / NCPPB 4357 / Et1/99).